We begin with the raw amino-acid sequence, 165 residues long: Endoribonuclease YbeY (165 aa).

Residues His131, His135, and His141 each contribute to the Zn(2+) site.

Belongs to the endoribonuclease YbeY family. Zn(2+) is required as a cofactor.

The protein localises to the cytoplasm. Single strand-specific metallo-endoribonuclease involved in late-stage 70S ribosome quality control and in maturation of the 3' terminus of the 16S rRNA. This chain is Endoribonuclease YbeY, found in Agathobacter rectalis (strain ATCC 33656 / DSM 3377 / JCM 17463 / KCTC 5835 / VPI 0990) (Eubacterium rectale).